Reading from the N-terminus, the 176-residue chain is Shikimate kinase (176 aa).

Gly14–Thr19 serves as a coordination point for ATP. Ser18 contacts Mg(2+). 3 residues coordinate substrate: Asp36, Arg60, and Gly83. Arg121 lines the ATP pocket. Substrate is bound at residue Arg140.

It belongs to the shikimate kinase family. As to quaternary structure, monomer. Requires Mg(2+) as cofactor.

The protein localises to the cytoplasm. It carries out the reaction shikimate + ATP = 3-phosphoshikimate + ADP + H(+). It participates in metabolic intermediate biosynthesis; chorismate biosynthesis; chorismate from D-erythrose 4-phosphate and phosphoenolpyruvate: step 5/7. Catalyzes the specific phosphorylation of the 3-hydroxyl group of shikimic acid using ATP as a cosubstrate. In Francisella tularensis subsp. holarctica (strain FTNF002-00 / FTA), this protein is Shikimate kinase.